The primary structure comprises 223 residues: MKKFLPSLLLMGSVACSSNQRMNDYSQPESQSDLAPKSSTIQPQPQPLLSKTPSMSLNLLSSSGPNRQVLPSEPSNFMTLMGQNGALLTVWALAKRNWLWAYPNIYSQDFGNIRNWKMEPGKHREYFRFVNQSLGTCVEAYGNGLIHDICSLDKLAQEFELLPTDSGAVVIKSVSQGRCVTYNPVSTTFYSTVTLSVCDGATEPSRDQTWYLAPPVLEATAVN.

The signal sequence occupies residues 1–15; it reads MKKFLPSLLLMGSVA. Residue cysteine 16 is the site of N-palmitoyl cysteine attachment. Cysteine 16 is lipidated: S-diacylglycerol cysteine. Residues 20–48 form a disordered region; the sequence is QRMNDYSQPESQSDLAPKSSTIQPQPQPL. The interval 91-102 is mediates binding to target cells; that stretch reads WALAKRNWLWAY. Residues 123–212 form the Ricin B-type lectin domain; sequence HREYFRFVNQ…EPSRDQTWYL (90 aa).

In terms of assembly, heterotrimer of 3 subunits, CdtA, CdtB and CdtC.

The protein resides in the cell outer membrane. Functionally, CDTs are cytotoxins which induce host cell distension, growth arrest in G2/M phase, nucleus swelling, and chromatin fragmentation in HeLa cells. CdtA, along with CdtC, probably forms a heterodimeric subunit required for the delivery of CdtB. The chain is Cytolethal distending toxin subunit A (cdtA) from Haemophilus ducreyi (strain 35000HP / ATCC 700724).